The primary structure comprises 264 residues: Teichoic acids export ATP-binding protein TagH (264 aa).

An ABC transporter domain is found at 24–243 (IKDALIPKNK…YEQFLKDFKK (220 aa)). ATP is bound at residue 57 to 64 (GINGSGKS).

This sequence belongs to the ABC transporter superfamily. Teichoic acids exporter (TC 3.A.1.104.1) family. The complex is composed of two ATP-binding proteins (TagH) and two transmembrane proteins (TagG).

The protein resides in the cell membrane. It carries out the reaction ATP + H2O + teichoic acidSide 1 = ADP + phosphate + teichoic acidSide 2.. Functionally, part of the ABC transporter complex TagGH involved in teichoic acids export. Responsible for energy coupling to the transport system. This is Teichoic acids export ATP-binding protein TagH from Staphylococcus haemolyticus (strain JCSC1435).